We begin with the raw amino-acid sequence, 279 residues long: uncharacterized protein (279 aa).

Positions asparagine 233–isoleucine 279 are disordered. Positions valine 246–leucine 259 are enriched in polar residues. Residues asparagine 260–asparagine 271 are compositionally biased toward low complexity.

This is an uncharacterized protein from Buchnera aphidicola subsp. Baizongia pistaciae (strain Bp).